Consider the following 642-residue polypeptide: ATP-dependent zinc metalloprotease FtsH (642 aa).

The Cytoplasmic segment spans residues 1–6 (MGRFTK). The helical transmembrane segment at 7–27 (NIVLYLLIIAAFVIAIDAFSG) threads the bilayer. Topologically, residues 28–101 (QSANKSELSY…TAAPPEQPAW (74 aa)) are extracellular. Residues 102-122 (WMSLLGSAIPIIILVVLFFFI) form a helical membrane-spanning segment. Topologically, residues 123–642 (MQQTQGGGGR…LSEASSNEIK (520 aa)) are cytoplasmic. 194–201 (GPPGTGKT) is an ATP binding site. Zn(2+) is bound at residue histidine 416. Glutamate 417 is a catalytic residue. Zn(2+) contacts are provided by histidine 420 and aspartate 492. A compositionally biased stretch (basic and acidic residues) spans 597-610 (TTKEPEAEEPKVAS). A disordered region spans residues 597–642 (TTKEPEAEEPKVASEADSSIVPEGVDAKKTTSTVADLSEASSNEIK). The span at 626–642 (TTSTVADLSEASSNEIK) shows a compositional bias: polar residues.

In the central section; belongs to the AAA ATPase family. The protein in the C-terminal section; belongs to the peptidase M41 family. Homohexamer. It depends on Zn(2+) as a cofactor.

It localises to the cell membrane. Its function is as follows. Acts as a processive, ATP-dependent zinc metallopeptidase for both cytoplasmic and membrane proteins. Plays a role in the quality control of integral membrane proteins. This chain is ATP-dependent zinc metalloprotease FtsH, found in Veillonella parvula (strain ATCC 10790 / DSM 2008 / CCUG 5123 / JCM 12972 / NCTC 11810 / Te3) (Veillonella alcalescens).